The following is a 308-amino-acid chain: D-alanine--D-alanine ligase (308 aa).

Residues 103–302 (KTVMATAGVP…FDELVQWMVE (200 aa)) form the ATP-grasp domain. 130–184 (MAPPYVIKPVADGSSVGVFMVTEAHEHPPQELFRDDWPHGEQLLVEKYVAGKELT) provides a ligand contact to ATP. Positions 252, 269, and 271 each coordinate Mg(2+).

This sequence belongs to the D-alanine--D-alanine ligase family. The cofactor is Mg(2+). Mn(2+) serves as cofactor.

The protein localises to the cytoplasm. It carries out the reaction 2 D-alanine + ATP = D-alanyl-D-alanine + ADP + phosphate + H(+). It functions in the pathway cell wall biogenesis; peptidoglycan biosynthesis. Functionally, cell wall formation. The sequence is that of D-alanine--D-alanine ligase from Rhodopseudomonas palustris (strain BisB18).